The sequence spans 181 residues: Oligoribonuclease (181 aa).

In terms of domain architecture, Exonuclease spans Leu-8–Leu-171. Residue Tyr-129 is part of the active site.

The protein belongs to the oligoribonuclease family.

Its subcellular location is the cytoplasm. 3'-to-5' exoribonuclease specific for small oligoribonucleotides. The polypeptide is Oligoribonuclease (Shewanella loihica (strain ATCC BAA-1088 / PV-4)).